We begin with the raw amino-acid sequence, 238 residues long: Cysteine-rich venom protein 2 (238 aa).

Positions 1 to 19 are cleaved as a signal peptide; it reads MIAFIVLLSLAAVLQQSSG. Residues 38–164 form the SCP domain; that stretch reads VDKHNALRRS…STKYLYVCQY (127 aa). 8 cysteine pairs are disulfide-bonded: C75–C153, C92–C165, C148–C162, C184–C191, C187–C196, C200–C233, C209–C227, and C218–C231. The ShKT domain occupies 200–233; sequence CEYEDAYTNCNDLVKERKCQTEWIKSQCPATCFC.

Belongs to the CRISP family. Expressed by the venom gland.

The protein resides in the secreted. Functionally, blocks contraction of smooth muscle elicited by high potassium-induced depolarization, but does not block caffeine-stimulated contraction. May target voltage-gated calcium channels (Cav) on smooth muscle. The protein is Cysteine-rich venom protein 2 of Hydrophis hardwickii (Hardwick's spine-bellied seasnake).